The sequence spans 233 residues: Small ribosomal subunit protein uS3 (233 aa).

The KH type-2 domain maps to 39-107 (IRTFLKRKLY…EVNINIKEER (69 aa)). The disordered stretch occupies residues 211-233 (GVQPEKTEESAPAKKPRRARRGK). Residues 213 to 222 (QPEKTEESAP) show a composition bias toward basic and acidic residues. A compositionally biased stretch (basic residues) spans 224–233 (KKPRRARRGK).

The protein belongs to the universal ribosomal protein uS3 family. In terms of assembly, part of the 30S ribosomal subunit. Forms a tight complex with proteins S10 and S14.

Its function is as follows. Binds the lower part of the 30S subunit head. Binds mRNA in the 70S ribosome, positioning it for translation. In Campylobacter lari (strain RM2100 / D67 / ATCC BAA-1060), this protein is Small ribosomal subunit protein uS3.